A 59-amino-acid polypeptide reads, in one-letter code: Large ribosomal subunit protein bL32 (59 aa).

The disordered stretch occupies residues 1–59; sequence MAVQQNKKSPSKRGMHRAHDFLTTPPLAVESTTGEAHLRHHISPAGFYRGKKVTKGKGE. Residues 49 to 59 are compositionally biased toward basic residues; that stretch reads RGKKVTKGKGE.

The protein belongs to the bacterial ribosomal protein bL32 family.

This is Large ribosomal subunit protein bL32 from Dechloromonas aromatica (strain RCB).